Consider the following 444-residue polypeptide: Putative methylesterase 15, chloroplastic (444 aa).

A compositionally biased stretch (polar residues) spans 1–27 (MGNSLRCISQEQDPNQKKPSSVVNGNS). Disordered stretches follow at residues 1–36 (MGNS…RRLS) and 48–91 (PSLS…DSLI). Residues 1 to 58 (MGNSLRCISQEQDPNQKKPSSVVNGNSSEKHVRRLSLIPSFRRRTLLPSLSCSGSSTS) constitute a chloroplast transit peptide. Residues 53–63 (SGSSTSSTSKK) show a composition bias toward low complexity. The segment covering 64 to 80 (GGIKTKKKIRERHHQEQ) has biased composition (basic residues). A compositionally biased stretch (basic and acidic residues) spans 81–90 (HHHDHEKDSL). The 125-residue stretch at 188-312 (FVLVHGGGFG…QPDSNYDLME (125 aa)) folds into the AB hydrolase-1 domain. Catalysis depends on D262, which acts as the Acyl-ester intermediate. Residues D390 and H418 each act as charge relay system in the active site.

The protein belongs to the AB hydrolase superfamily. Methylesterase family.

Its subcellular location is the plastid. It is found in the chloroplast. Functionally, putative methylesterase. This is Putative methylesterase 15, chloroplastic from Arabidopsis thaliana (Mouse-ear cress).